Consider the following 300-residue polypeptide: Actin-related protein 2/3 complex subunit 2 (300 aa).

N6-acetyllysine occurs at positions 275 and 295.

It belongs to the ARPC2 family. In terms of assembly, component of the Arp2/3 complex composed of ACTR2/ARP2, ACTR3/ARP3, ARPC1B/p41-ARC, ARPC2/p34-ARC, ARPC3/p21-ARC, ARPC4/p20-ARC and ARPC5/p16-ARC. Interacts with SHANK3; the interaction probably mediates the association of SHANK3 with the Arp2/3 complex.

The protein localises to the cytoplasm. Its subcellular location is the cytoskeleton. It localises to the cell projection. The protein resides in the synapse. It is found in the synaptosome. The protein localises to the nucleus. Actin-binding component of the Arp2/3 complex, a multiprotein complex that mediates actin polymerization upon stimulation by nucleation-promoting factor (NPF). The Arp2/3 complex mediates the formation of branched actin networks in the cytoplasm, providing the force for cell motility. Seems to contact the mother actin filament. In addition to its role in the cytoplasmic cytoskeleton, the Arp2/3 complex also promotes actin polymerization in the nucleus, thereby regulating gene transcription and repair of damaged DNA. The Arp2/3 complex promotes homologous recombination (HR) repair in response to DNA damage by promoting nuclear actin polymerization, leading to drive motility of double-strand breaks (DSBs). In Rattus norvegicus (Rat), this protein is Actin-related protein 2/3 complex subunit 2.